The primary structure comprises 316 residues: Small neutral protease regulatory protein (316 aa).

The 56-residue stretch at 1 to 56 folds into the HTH lysR-type domain; the sequence is MRHLRALCAIADTGSVRRAARELGVSQPALTTQLRRIEQSLGAELFHRGRDGCRPT. Positions 16–35 form a DNA-binding region, H-T-H motif; the sequence is VRRAARELGVSQPALTTQLR.

Belongs to the LysR transcriptional regulatory family.

In terms of biological role, transcriptional trans-activator of the gene (mprA) for the small neutral protease. The protein is Small neutral protease regulatory protein (mprR) of Streptomyces coelicolor.